Reading from the N-terminus, the 277-residue chain is MGNGVQPLDPVAIQIGSISVKWYGVIIASAVVIALLLALSEANKRKMDKEIIVDLLIWAIPISIISARIYYVIFEWDFYKNNLGEIVKIWHGGIAIYGALIGAVLTAIIFSRIKKISFWQLADVVAPSLIIAQAIGRWGNFMNQEAHGAETTRSFLESLHLPDFIINQMYIDGAYYQPTFLYESLWNVLGFVILLIIRRTKIRRGELFLGYVIWYSFGRFFIEGMRTDSLMWGDFRVSQALSLLLIVLSIGIIIYRRLKMNPPYYMEDKFGKVVKKK.

A run of 4 helical transmembrane segments spans residues 18–38 (ISVK…LLLA), 51–71 (IIVD…RIYY), 89–109 (IWHG…TAII), and 116–136 (ISFW…QAIG). R137 provides a ligand contact to a 1,2-diacyl-sn-glycero-3-phospho-(1'-sn-glycerol). Transmembrane regions (helical) follow at residues 177–197 (QPTF…LLII), 205–225 (GELF…IEGM), and 235–255 (FRVS…IIIY).

This sequence belongs to the Lgt family.

It localises to the cell membrane. The catalysed reaction is L-cysteinyl-[prolipoprotein] + a 1,2-diacyl-sn-glycero-3-phospho-(1'-sn-glycerol) = an S-1,2-diacyl-sn-glyceryl-L-cysteinyl-[prolipoprotein] + sn-glycerol 1-phosphate + H(+). It functions in the pathway protein modification; lipoprotein biosynthesis (diacylglyceryl transfer). Functionally, catalyzes the transfer of the diacylglyceryl group from phosphatidylglycerol to the sulfhydryl group of the N-terminal cysteine of a prolipoprotein, the first step in the formation of mature lipoproteins. In Listeria monocytogenes serovar 1/2a (strain ATCC BAA-679 / EGD-e), this protein is Phosphatidylglycerol--prolipoprotein diacylglyceryl transferase.